The following is a 377-amino-acid chain: Dihydroorotase, mitochondrial (377 aa).

Zn(2+)-binding residues include His44, His46, Lys130, His168, and His206. At Lys130 the chain carries N6-carboxylysine. Position 223 is a phosphoserine (Ser223). Zn(2+) is bound at residue Asp280.

It belongs to the metallo-dependent hydrolases superfamily. DHOase family. Class II DHOase subfamily. The cofactor is Zn(2+).

The protein resides in the mitochondrion. The enzyme catalyses (S)-dihydroorotate + H2O = N-carbamoyl-L-aspartate + H(+). It functions in the pathway pyrimidine metabolism; UMP biosynthesis via de novo pathway; (S)-dihydroorotate from bicarbonate: step 3/3. This is Dihydroorotase, mitochondrial (PYR4) from Arabidopsis thaliana (Mouse-ear cress).